Consider the following 243-residue polypeptide: UMP-CMP kinase 2 (243 aa).

G69–T74 is a binding site for ATP. An NMP region spans residues S89–V118. Residues R95, K116–V118, and G143–R146 contribute to the a ribonucleoside 5'-phosphate site. N150 is a CMP binding site. Residues G181–D189 are LID. R182 contributes to the ATP binding site. A ribonucleoside 5'-phosphate-binding residues include R186 and R197.

This sequence belongs to the adenylate kinase family. UMP-CMP kinase subfamily. In terms of assembly, monomer. Mg(2+) serves as cofactor.

It localises to the cytoplasm. The protein resides in the nucleus. The enzyme catalyses UMP + ATP = UDP + ADP. It catalyses the reaction CMP + ATP = CDP + ADP. The catalysed reaction is dCMP + ATP = dCDP + ADP. In terms of biological role, catalyzes the phosphorylation of pyrimidine nucleoside monophosphates at the expense of ATP. Plays an important role in de novo pyrimidine nucleotide biosynthesis. Has preference for UMP and CMP as phosphate acceptors. This is UMP-CMP kinase 2 from Oryza sativa subsp. japonica (Rice).